The chain runs to 172 residues: 3-hydroxydecanoyl-[acyl-carrier-protein] dehydratase (172 aa).

His71 is a catalytic residue.

Belongs to the thioester dehydratase family. FabA subfamily. As to quaternary structure, homodimer.

The protein resides in the cytoplasm. It catalyses the reaction a (3R)-hydroxyacyl-[ACP] = a (2E)-enoyl-[ACP] + H2O. It carries out the reaction (3R)-hydroxydecanoyl-[ACP] = (2E)-decenoyl-[ACP] + H2O. The enzyme catalyses (2E)-decenoyl-[ACP] = (3Z)-decenoyl-[ACP]. It functions in the pathway lipid metabolism; fatty acid biosynthesis. Functionally, necessary for the introduction of cis unsaturation into fatty acids. Catalyzes the dehydration of (3R)-3-hydroxydecanoyl-ACP to E-(2)-decenoyl-ACP and then its isomerization to Z-(3)-decenoyl-ACP. Can catalyze the dehydratase reaction for beta-hydroxyacyl-ACPs with saturated chain lengths up to 16:0, being most active on intermediate chain length. The protein is 3-hydroxydecanoyl-[acyl-carrier-protein] dehydratase of Yersinia enterocolitica serotype O:8 / biotype 1B (strain NCTC 13174 / 8081).